We begin with the raw amino-acid sequence, 106 residues long: Large ribosomal subunit protein uL24 (106 aa).

Positions 69 to 106 are disordered; that stretch reads SNLNPVDPKTGKATRVGRKVSSEGTLVRYSKKSGEEIK.

This sequence belongs to the universal ribosomal protein uL24 family. As to quaternary structure, part of the 50S ribosomal subunit.

One of two assembly initiator proteins, it binds directly to the 5'-end of the 23S rRNA, where it nucleates assembly of the 50S subunit. Its function is as follows. One of the proteins that surrounds the polypeptide exit tunnel on the outside of the subunit. The chain is Large ribosomal subunit protein uL24 from Bacteroides fragilis (strain ATCC 25285 / DSM 2151 / CCUG 4856 / JCM 11019 / LMG 10263 / NCTC 9343 / Onslow / VPI 2553 / EN-2).